The sequence spans 330 residues: N-acetyl-gamma-glutamyl-phosphate reductase (330 aa).

Cys-155 is an active-site residue.

This sequence belongs to the NAGSA dehydrogenase family. Type 1 subfamily.

The protein resides in the cytoplasm. It catalyses the reaction N-acetyl-L-glutamate 5-semialdehyde + phosphate + NADP(+) = N-acetyl-L-glutamyl 5-phosphate + NADPH + H(+). Its pathway is amino-acid biosynthesis; L-arginine biosynthesis; N(2)-acetyl-L-ornithine from L-glutamate: step 3/4. In terms of biological role, catalyzes the NADPH-dependent reduction of N-acetyl-5-glutamyl phosphate to yield N-acetyl-L-glutamate 5-semialdehyde. This chain is N-acetyl-gamma-glutamyl-phosphate reductase, found in Shewanella halifaxensis (strain HAW-EB4).